The following is a 290-amino-acid chain: MPTLQGLRRKVKTIQNISHIIHSMETLSMVKIRALQDKSLRLKPYTEELNNILMELITRLPNEYLNHPLIRERSVYKTGILVFTSDLGFCGSYNLQIIESLKKFIEGKRAQNLVFYSIGFYAQRYLSSNNFNIRKKYIKFLEDTSFSQAKILSKDLLDDFLNYVIDELYVIYFEFINIVKQEVRIKKILPMIPVEVKERKEEYFLFLPSLSSILDPLLMDIFETQIHQIMLDSAASEQAFRRFAMKRAYDNAQKLHSKLIFQLNQLRQTQITKELLDITSSIEAMKEEVK.

It belongs to the ATPase gamma chain family. As to quaternary structure, F-type ATPases have 2 components, CF(1) - the catalytic core - and CF(0) - the membrane proton channel. CF(1) has five subunits: alpha(3), beta(3), gamma(1), delta(1), epsilon(1). CF(0) has three main subunits: a, b and c.

The protein resides in the cell inner membrane. Functionally, produces ATP from ADP in the presence of a proton gradient across the membrane. The gamma chain is believed to be important in regulating ATPase activity and the flow of protons through the CF(0) complex. This is ATP synthase gamma chain from Dictyoglomus turgidum (strain DSM 6724 / Z-1310).